A 417-amino-acid chain; its full sequence is UDP-N-acetylglucosamine 1-carboxyvinyltransferase (417 aa).

22–23 serves as a coordination point for phosphoenolpyruvate; sequence KN. UDP-N-acetyl-alpha-D-glucosamine is bound at residue Arg92. Cys116 (proton donor) is an active-site residue. At Cys116 the chain carries 2-(S-cysteinyl)pyruvic acid O-phosphothioketal. UDP-N-acetyl-alpha-D-glucosamine is bound by residues Asp304 and Ile326.

This sequence belongs to the EPSP synthase family. MurA subfamily.

The protein localises to the cytoplasm. It carries out the reaction phosphoenolpyruvate + UDP-N-acetyl-alpha-D-glucosamine = UDP-N-acetyl-3-O-(1-carboxyvinyl)-alpha-D-glucosamine + phosphate. It functions in the pathway cell wall biogenesis; peptidoglycan biosynthesis. Cell wall formation. Adds enolpyruvyl to UDP-N-acetylglucosamine. The chain is UDP-N-acetylglucosamine 1-carboxyvinyltransferase from Geobacter metallireducens (strain ATCC 53774 / DSM 7210 / GS-15).